Consider the following 776-residue polypeptide: Serine/threonine-protein kinase SIK1 (776 aa).

In terms of domain architecture, Protein kinase spans 27–278; sequence YDVERTLGKG…IAQIRQHRWM (252 aa). Residues 33–41 and lysine 56 each bind ATP; that span reads LGKGNFAVV. The Proton acceptor role is filled by aspartate 149. The residue at position 182 (threonine 182) is a Phosphothreonine; by LKB1 and GSK3-beta. Phosphoserine; by autocatalysis is present on serine 186. The UBA domain maps to 303–343; the sequence is DYNEQVLGIMQALGIDRQRTVESLQNSSYNHFAAIYYLLLE. Threonine 322 carries the post-translational modification Phosphothreonine; by CaMK1. 2 disordered regions span residues 350 to 371 and 449 to 472; these read STQP…RNSD and EARQ…STGR. The residue at position 577 (serine 577) is a Phosphoserine; by PKA. Residues 586 to 612 are RK-rich region; that stretch reads KAFRQQLRKNARTKGFLGLNKIKGLAR. A disordered region spans residues 621 to 643; the sequence is GSRGGMSTFHTPAPSSGLQGCTA. Residues 628–643 are compositionally biased toward polar residues; it reads TFHTPAPSSGLQGCTA.

It belongs to the protein kinase superfamily. CAMK Ser/Thr protein kinase family. AMPK subfamily. In terms of assembly, interacts (when phosphorylated on Thr-182 and Ser-186) with YWHAZ. Interacts with ATP1A1. Mg(2+) serves as cofactor. Post-translationally, phosphorylated at Thr-182 by STK11/LKB1 in complex with STE20-related adapter-alpha (STRADA) pseudo kinase and CAB39, leading to its activation. Phosphorylation at Thr-182 promotes autophosphorylation at Ser-186, which is required for sustained activity. Autophosphorylation at Ser-186 is maintained by sequential phosphorylation at Thr-182 by GSK3-beta. GSK3-beta cannot initiate phosphorylation at Thr-182, it can only maintain it. Phosphorylation at Ser-577 by PKA promotes translocation to the cytoplasm. Phosphorylation at Thr-322 by CaMK1 following intracellular sodium concentration leads to activation.

It localises to the cytoplasm. The protein resides in the nucleus. The catalysed reaction is L-seryl-[protein] + ATP = O-phospho-L-seryl-[protein] + ADP + H(+). It carries out the reaction L-threonyl-[protein] + ATP = O-phospho-L-threonyl-[protein] + ADP + H(+). Its activity is regulated as follows. Activated by phosphorylation on Thr-182. Also activated by phosphorylation on Thr-322 in response to increases in intracellular sodium in parallel with elevations in intracellular calcium through the reversible sodium/calcium exchanger. In terms of biological role, serine/threonine-protein kinase involved in various processes such as cell cycle regulation, gluconeogenesis and lipogenesis regulation, muscle growth and differentiation and tumor suppression. Phosphorylates HDAC4, HDAC5, PPME1, SREBF1, CRTC1/TORC1 and CRTC2/TORC2. Acts as a tumor suppressor and plays a key role in p53/TP53-dependent anoikis, a type of apoptosis triggered by cell detachment: required for phosphorylation of p53/TP53 in response to loss of adhesion and is able to suppress metastasis. Part of a sodium-sensing signaling network, probably by mediating phosphorylation of PPME1: following increases in intracellular sodium, SIK1 is activated by CaMK1 and phosphorylates PPME1 subunit of protein phosphatase 2A (PP2A), leading to dephosphorylation of sodium/potassium-transporting ATPase ATP1A1 and subsequent increase activity of ATP1A1. Acts as a regulator of muscle cells by phosphorylating and inhibiting class II histone deacetylases HDAC4 and HDAC5, leading to promote expression of MEF2 target genes in myocytes. Also required during cardiomyogenesis by regulating the exit of cardiomyoblasts from the cell cycle via down-regulation of CDKN1C/p57Kip2. Acts as a regulator of hepatic gluconeogenesis by phosphorylating and repressing the CREB-specific coactivators CRTC1/TORC1 and CRTC2/TORC2, leading to inhibit CREB activity. Also regulates hepatic lipogenesis by phosphorylating and inhibiting SREBF1. In concert with CRTC1/TORC1, regulates the light-induced entrainment of the circadian clock by attenuating PER1 induction; represses CREB-mediated transcription of PER1 by phosphorylating and deactivating CRTC1/TORC1. This Rattus norvegicus (Rat) protein is Serine/threonine-protein kinase SIK1 (Sik1).